We begin with the raw amino-acid sequence, 569 residues long: Potassium-transporting ATPase potassium-binding subunit (569 aa).

Transmembrane regions (helical) follow at residues 11-31 (LLLA…ACVF), 64-84 (LAYT…LYGI), 135-155 (AGLA…ALAV), 179-199 (LYLL…MGIP), 258-278 (FNIL…GKMV), 285-305 (WALI…VYIA), 384-404 (GLYG…LMVG), 423-443 (MLAV…AAVL), 490-510 (LGIS…AIAG), and 531-551 (LFVG…YFPA).

Belongs to the KdpA family. The system is composed of three essential subunits: KdpA, KdpB and KdpC.

It is found in the cell inner membrane. Functionally, part of the high-affinity ATP-driven potassium transport (or Kdp) system, which catalyzes the hydrolysis of ATP coupled with the electrogenic transport of potassium into the cytoplasm. This subunit binds the periplasmic potassium ions and delivers the ions to the membrane domain of KdpB through an intramembrane tunnel. The polypeptide is Potassium-transporting ATPase potassium-binding subunit (Allorhizobium ampelinum (strain ATCC BAA-846 / DSM 112012 / S4) (Agrobacterium vitis (strain S4))).